We begin with the raw amino-acid sequence, 240 residues long: MTRSSSDRAIVVPAAQNALFTDSPFPTPDSRLIAGVDEAGRGPLAGPVAVAAVVFDPAKPRINGLDDSKQLSAERREQLYARIVDRALAWSVVLIDSEEIDRINIYQATMLGMRRAVEGVAHVAGFARIDGNRVPKGLPFPAEALIGGDALDRAIMAASIVAKVTRDRLMRELHAQHPEYRFDLHKGYSTPAHLAALQTHGPCPQHRRSFAPVRRALGLETAQTAWDVPCAPADGLLLAE.

One can recognise an RNase H type-2 domain in the interval 31–222 (RLIAGVDEAG…VRRALGLETA (192 aa)). A divalent metal cation contacts are provided by D37, E38, and D130.

The protein belongs to the RNase HII family. Mn(2+) serves as cofactor. Mg(2+) is required as a cofactor.

The protein localises to the cytoplasm. The catalysed reaction is Endonucleolytic cleavage to 5'-phosphomonoester.. Its function is as follows. Endonuclease that specifically degrades the RNA of RNA-DNA hybrids. The chain is Ribonuclease HII from Xanthomonas campestris pv. campestris (strain B100).